The primary structure comprises 123 residues: Large ribosomal subunit protein uL14 (123 aa).

Belongs to the universal ribosomal protein uL14 family. Part of the 50S ribosomal subunit. Forms a cluster with proteins L3 and L19. In the 70S ribosome, L14 and L19 interact and together make contacts with the 16S rRNA in bridges B5 and B8.

Functionally, binds to 23S rRNA. Forms part of two intersubunit bridges in the 70S ribosome. This Buchnera aphidicola subsp. Acyrthosiphon kondoi (Acyrthosiphon kondoi symbiotic bacterium) protein is Large ribosomal subunit protein uL14.